We begin with the raw amino-acid sequence, 519 residues long: MNNPRSVSPLVSPANHSDLLENQRQSGSGDFSRLEKRIGARKMKFHSKSMPRGAMFLDQEASRNFHDKRYDLFRTMSGKLERQISNLRGKPTESSLQDHKEITESLTADRYFDALQGPELETLKEKEKIVLPEDKTWPFLLRFPITSYGMCLGVSSQAIMWKTLATTEAEKFLHVTQVINHVLWWISLLLLLAVSITYLFKTILFFEAVRREFRHPIRVNFFFAPLISILFLALGIPHSIISHLPSTLWYFLMAPILFLEMKIYGQWMSGGQRRLSKVANPTNHLSIVGNFAGALLGASMGLKEGPIFFFAIGLAYYLVLFVTLYQRLPTNETLPKELHPVFFLFVAAPAVASMAWTKISASFDLGSRLAYFISLFLYFSLVCRINLFRGFKFSLAWWAYTFPMTAVASATIKYSDEVTGVATKILSVVMSGAATLTVIAVLGLTVMHAFVQRDLFPNDVVIAISAEQPKQKRWFKHLTKESYGNNERCPKILDPEDNQIDLESPPLVNVDSSTVQNSN.

A disordered region spans residues 1 to 31 (MNNPRSVSPLVSPANHSDLLENQRQSGSGDF). Over 1–140 (MNNPRSVSPL…LPEDKTWPFL (140 aa)) the chain is Cytoplasmic. Residues 20-29 (LENQRQSGSG) show a composition bias toward polar residues. 2 positions are modified to phosphoserine: S77 and S85. A helical membrane pass occupies residues 141–161 (LRFPITSYGMCLGVSSQAIMW). Residues 162–185 (KTLATTEAEKFLHVTQVINHVLWW) are Extracellular-facing. The chain crosses the membrane as a helical span at residues 186–206 (ISLLLLLAVSITYLFKTILFF). Topologically, residues 207-220 (EAVRREFRHPIRVN) are cytoplasmic. The chain crosses the membrane as a helical span at residues 221–241 (FFFAPLISILFLALGIPHSII). Topologically, residues 242-247 (SHLPST) are extracellular. The chain crosses the membrane as a helical span at residues 248–268 (LWYFLMAPILFLEMKIYGQWM). Residues 269-281 (SGGQRRLSKVANP) lie on the Cytoplasmic side of the membrane. The helical transmembrane segment at 282 to 302 (TNHLSIVGNFAGALLGASMGL) threads the bilayer. Residues 303–304 (KE) are Extracellular-facing. Residues 305–325 (GPIFFFAIGLAYYLVLFVTLY) form a helical membrane-spanning segment. Residues 326–340 (QRLPTNETLPKELHP) are Cytoplasmic-facing. Residues 341-361 (VFFLFVAAPAVASMAWTKISA) form a helical membrane-spanning segment. Residue S362 is a topological domain, extracellular. The helical transmembrane segment at 363-383 (FDLGSRLAYFISLFLYFSLVC) threads the bilayer. The Cytoplasmic segment spans residues 384-389 (RINLFR). Residues 390-410 (GFKFSLAWWAYTFPMTAVASA) form a helical membrane-spanning segment. The Extracellular portion of the chain corresponds to 411–424 (TIKYSDEVTGVATK). The helical transmembrane segment at 425–445 (ILSVVMSGAATLTVIAVLGLT) threads the bilayer. Residues 446–519 (VMHAFVQRDL…VDSSTVQNSN (74 aa)) lie on the Cytoplasmic side of the membrane. The segment at 495-519 (PEDNQIDLESPPLVNVDSSTVQNSN) is disordered. The segment covering 510–519 (VDSSTVQNSN) has biased composition (polar residues).

It belongs to the SLAC1 S-type anion channel family. As to quaternary structure, homotrimer. As to expression, expressed in lateral root primordia and tap root tips.

It is found in the cell membrane. In terms of biological role, slow, weak voltage-dependent S-type anion efflux channel involved in maintenance of anion homeostasis. The sequence is that of S-type anion channel SLAH2 (SLAH2) from Arabidopsis thaliana (Mouse-ear cress).